The chain runs to 723 residues: Probable inactive serine/threonine-protein kinase fnkD (723 aa).

Positions 33–276 (WEIITQLESN…TTSLPKYSTL (244 aa)) constitute a Protein kinase domain. FNIP repeat units follow at residues 301 to 342 (FNQP…ELAS), 343 to 384 (FNQT…LLSS), 385 to 426 (FNQP…SLAS), 524 to 565 (FNQS…ILPS), 566 to 606 (FNHP…LGDE), and 647 to 690 (FNIE…FGIT).

The protein belongs to the protein kinase superfamily. STE Ser/Thr protein kinase family.

This Dictyostelium discoideum (Social amoeba) protein is Probable inactive serine/threonine-protein kinase fnkD (fnkD-1).